A 231-amino-acid chain; its full sequence is Ribosomal RNA large subunit methyltransferase E (231 aa).

Residues Gly-76, Trp-78, Asp-99, Asp-115, and Asp-139 each coordinate S-adenosyl-L-methionine. Lys-179 functions as the Proton acceptor in the catalytic mechanism.

It belongs to the class I-like SAM-binding methyltransferase superfamily. RNA methyltransferase RlmE family.

It is found in the cytoplasm. The catalysed reaction is uridine(2552) in 23S rRNA + S-adenosyl-L-methionine = 2'-O-methyluridine(2552) in 23S rRNA + S-adenosyl-L-homocysteine + H(+). Functionally, specifically methylates the uridine in position 2552 of 23S rRNA at the 2'-O position of the ribose in the fully assembled 50S ribosomal subunit. This is Ribosomal RNA large subunit methyltransferase E from Bradyrhizobium sp. (strain BTAi1 / ATCC BAA-1182).